The following is a 148-amino-acid chain: Small ribosomal subunit protein eS19 (148 aa).

The protein belongs to the eukaryotic ribosomal protein eS19 family. As to quaternary structure, part of the 30S ribosomal subunit.

In terms of biological role, may be involved in maturation of the 30S ribosomal subunit. In Methanocaldococcus jannaschii (strain ATCC 43067 / DSM 2661 / JAL-1 / JCM 10045 / NBRC 100440) (Methanococcus jannaschii), this protein is Small ribosomal subunit protein eS19.